We begin with the raw amino-acid sequence, 138 residues long: Abscisic stress-ripening protein 5 (138 aa).

Residues 1-13 show a composition bias toward basic residues; sequence MAEEKHHHHLFHH. 2 disordered regions span residues 1–27 and 106–138; these read MAEE…DSYG and GAGG…HLFG.

It belongs to the abscisic acid and water stress-induced protein family.

The protein localises to the nucleus. Its subcellular location is the cytoplasm. Its function is as follows. Involved in tolerance to aluminum. Regulates the expression of different genes that collectively contribute to the protection of the cell in response to aluminum stress. This chain is Abscisic stress-ripening protein 5, found in Oryza sativa subsp. indica (Rice).